The chain runs to 793 residues: Putative potassium transporter 8 (793 aa).

The Cytoplasmic segment spans residues 1-22 (MDLEFGRGMRSPQRDSWKTTLL). The chain crosses the membrane as a helical span at residues 23–43 (LAYQSLGVVYGDLSISPLYVF). At 44-59 (KSTFAEDIQHSETNEE) the chain is on the extracellular side. Residues 60 to 80 (IFGVLSFVFWTLTLIPLIKYV) traverse the membrane as a helical segment. At 81 to 151 (SIVLRADDNG…EKHKKLHTAL (71 aa)) the chain is on the cytoplasmic side. A helical membrane pass occupies residues 152–172 (LIMVLIGTCMVIGDGVLTPAI). At 173–191 (SVFSAVSGLEFSLSKDHRE) the chain is on the extracellular side. The helical transmembrane segment at 192-212 (YAVIPITCVILAFLFALQHYG) threads the bilayer. Residues 213–215 (THR) are Cytoplasmic-facing. The helical transmembrane segment at 216–236 (VGFLFAPIVLAWLICMSALGL) threads the bilayer. At 237–264 (YNIIHWNPHVYQALNPCYMFKFLKKTRK) the chain is on the extracellular side. The helical transmembrane segment at 265–285 (YGWMSLGGILLCMTGSEAMFA) threads the bilayer. Topologically, residues 286–292 (DLGHFSY) are cytoplasmic. Residues 293 to 313 (SAIQLAFTSLVYPALILAYMG) traverse the membrane as a helical segment. Over 314 to 343 (QAAYLSKHHDFYSNSQVGFYIAVPDKVRWP) the chain is Extracellular. Residues 344-364 (VLVLAILASVVGSQAIISGTF) traverse the membrane as a helical segment. The Cytoplasmic portion of the chain corresponds to 365 to 391 (SIINQSQSLSCFPRVKVVHTSDKIHGQ). A helical membrane pass occupies residues 392-412 (IYIPEINWLLMILCIAVTVGF). Topologically, residues 413-422 (RDTKHMGNAS) are extracellular. An N-linked (GlcNAc...) asparagine glycan is attached at Asn420. The helical transmembrane segment at 423–443 (GLAVITVMLVTTCLTSLVIML) threads the bilayer. The Cytoplasmic segment spans residues 444–448 (CWRRP). The chain crosses the membrane as a helical span at residues 449–469 (PVLALCFLLFFGSVEALYFSA). Residues 470–473 (SLIK) are Extracellular-facing. The chain crosses the membrane as a helical span at residues 474–494 (FLEGAWLPILLALFLMAVMLV). Residues 495–793 (WHYTTIKKYE…LLEVGMVYVL (299 aa)) are Cytoplasmic-facing. A compositionally biased stretch (polar residues) spans 664–675 (DSVQHSSAASVE). Positions 664–698 (DSVQHSSAASVETTTTRRRSGGGDDDGSPGGGGGR) are disordered.

Belongs to the HAK/KUP transporter (TC 2.A.72.3) family.

The protein resides in the membrane. Its function is as follows. High-affinity potassium transporter. In Oryza sativa subsp. japonica (Rice), this protein is Putative potassium transporter 8 (HAK8).